The primary structure comprises 782 residues: Sulfate permease family protein 3 (782 aa).

Helical transmembrane passes span 30–52 (YACSPSKCIHSLLSFLPIITWLP), 64–84 (LSGGLTMAVFSVPQGIALASI), 86–106 (GVPPVYGLYTAIFPSFLYIFF), 113–133 (ALGGFAVLSLMTHGAIEKVML), 196–216 (IHVATTIIFLAGVIQVFMGVF), 232–252 (GFVVGGGIHVFFAQIGNMLGI), 274–294 (LDNVHIPTVCISLSSFLFLVF), 302–322 (WLNSAFNYPVPFELVLVVVGI), 359–379 (HIGLNAAAIAITAVAIHITVA), 398–418 (ALGFVGVLSSFFPVFPVTSGF), 433–453 (LTCLFSSLALLSVILCIGPAL), and 497–517 (FFLTVCYDMGEGLLMAIGFAV). Residues 546 to 700 (KRDLERIQGN…NKVGDAVKAA (155 aa)) form the STAS domain. Residues 728 to 742 (IDEESSDSNDNDDAE) show a composition bias toward acidic residues. The disordered stretch occupies residues 728 to 782 (IDEESSDSNDNDDAEIQERITEESENSEEVMSETSVSIEDATSLTSSRNSINSEE). Residues 767–782 (DATSLTSSRNSINSEE) are compositionally biased toward polar residues.

It belongs to the SLC26A/SulP transporter (TC 2.A.53) family.

The protein resides in the membrane. Its function is as follows. Possible sulfate transporter. The chain is Sulfate permease family protein 3 (sulp-3) from Caenorhabditis elegans.